The following is a 100-amino-acid chain: Small ribosomal subunit protein uS14c (100 aa).

Belongs to the universal ribosomal protein uS14 family. As to quaternary structure, part of the 30S ribosomal subunit.

The protein localises to the plastid. Its subcellular location is the chloroplast. Functionally, binds 16S rRNA, required for the assembly of 30S particles. The polypeptide is Small ribosomal subunit protein uS14c (Lotus japonicus (Lotus corniculatus var. japonicus)).